A 1182-amino-acid polypeptide reads, in one-letter code: Intraflagellar transport protein 122 homolog (1182 aa).

WD repeat units follow at residues K10 to K50, G51 to T91, N93 to H129, S131 to I169, G174 to D217, P219 to V258, E260 to Y300, and K453 to Q492.

In terms of assembly, component of the IFT complex A (IFT-A) complex. IFT-A complex is divided into a core subcomplex composed of IFT122:IFT140:WDR19 which is associated with TULP3 and a peripheral subcomplex composed of IFT43:WDR35:TTC21B. Interacts with IFT43:WDR35; the interaction connects the 2 IFT-A subcomplexes. Interacts with IFTAP; the interaction associates IFTAP with IFT-A complex.

Its subcellular location is the cell projection. The protein resides in the cilium. It is found in the cytoplasm. The protein localises to the cytoskeleton. It localises to the cilium basal body. Its function is as follows. As a component of the IFT complex A (IFT-A), a complex required for retrograde ciliary transport and entry into cilia of G protein-coupled receptors (GPCRs), it is required in ciliogenesis and ciliary protein trafficking. Involved in cilia formation during neuronal patterning. Acts as a negative regulator of Shh signaling. Required to recruit TULP3 to primary cilia. In Mus musculus (Mouse), this protein is Intraflagellar transport protein 122 homolog.